The sequence spans 280 residues: Dermonecrotic toxin LsSicTox-alphaIA1 (280 aa).

Residue H12 is part of the active site. The Mg(2+) site is built by E32 and D34. The active-site Nucleophile is H48. 2 disulfides stabilise this stretch: C52–C58 and C54–C197. Residue D92 participates in Mg(2+) binding.

This sequence belongs to the arthropod phospholipase D family. Class II subfamily. It depends on Mg(2+) as a cofactor. As to expression, expressed by the venom gland.

The protein resides in the secreted. The catalysed reaction is an N-(acyl)-sphingosylphosphocholine = an N-(acyl)-sphingosyl-1,3-cyclic phosphate + choline. The enzyme catalyses an N-(acyl)-sphingosylphosphoethanolamine = an N-(acyl)-sphingosyl-1,3-cyclic phosphate + ethanolamine. It catalyses the reaction a 1-acyl-sn-glycero-3-phosphocholine = a 1-acyl-sn-glycero-2,3-cyclic phosphate + choline. It carries out the reaction a 1-acyl-sn-glycero-3-phosphoethanolamine = a 1-acyl-sn-glycero-2,3-cyclic phosphate + ethanolamine. In terms of biological role, dermonecrotic toxins cleave the phosphodiester linkage between the phosphate and headgroup of certain phospholipids (sphingolipid and lysolipid substrates), forming an alcohol (often choline) and a cyclic phosphate. This toxin acts on sphingomyelin (SM). It may also act on ceramide phosphoethanolamine (CPE), lysophosphatidylcholine (LPC) and lysophosphatidylethanolamine (LPE), but not on lysophosphatidylserine (LPS), and lysophosphatidylglycerol (LPG). It acts by transphosphatidylation, releasing exclusively cyclic phosphate products as second products. Induces dermonecrosis, hemolysis, increased vascular permeability, edema, inflammatory response, and platelet aggregation. The polypeptide is Dermonecrotic toxin LsSicTox-alphaIA1 (Loxosceles similis (Brazilian brown spider)).